The primary structure comprises 360 residues: DNA replication and repair protein RecF (360 aa).

30–37 (GANGSGKT) contributes to the ATP binding site.

This sequence belongs to the RecF family.

Its subcellular location is the cytoplasm. In terms of biological role, the RecF protein is involved in DNA metabolism; it is required for DNA replication and normal SOS inducibility. RecF binds preferentially to single-stranded, linear DNA. It also seems to bind ATP. This chain is DNA replication and repair protein RecF, found in Acinetobacter baumannii (strain ATCC 17978 / DSM 105126 / CIP 53.77 / LMG 1025 / NCDC KC755 / 5377).